A 190-amino-acid chain; its full sequence is 6,7-dimethyl-8-ribityllumazine synthase (190 aa).

Residues Phe-23, 61-63 (SFE), and 85-87 (AVI) contribute to the 5-amino-6-(D-ribitylamino)uracil site. 90 to 91 (QT) contacts (2S)-2-hydroxy-3-oxobutyl phosphate. His-93 functions as the Proton donor in the catalytic mechanism. 5-amino-6-(D-ribitylamino)uracil is bound at residue Phe-118. Arg-132 contacts (2S)-2-hydroxy-3-oxobutyl phosphate.

This sequence belongs to the DMRL synthase family.

The catalysed reaction is (2S)-2-hydroxy-3-oxobutyl phosphate + 5-amino-6-(D-ribitylamino)uracil = 6,7-dimethyl-8-(1-D-ribityl)lumazine + phosphate + 2 H2O + H(+). It participates in cofactor biosynthesis; riboflavin biosynthesis; riboflavin from 2-hydroxy-3-oxobutyl phosphate and 5-amino-6-(D-ribitylamino)uracil: step 1/2. In terms of biological role, catalyzes the formation of 6,7-dimethyl-8-ribityllumazine by condensation of 5-amino-6-(D-ribitylamino)uracil with 3,4-dihydroxy-2-butanone 4-phosphate. This is the penultimate step in the biosynthesis of riboflavin. In Trichormus variabilis (strain ATCC 29413 / PCC 7937) (Anabaena variabilis), this protein is 6,7-dimethyl-8-ribityllumazine synthase.